The chain runs to 361 residues: DNA replication and repair protein RecF (361 aa).

Residue 30 to 37 (GDNAQGKT) coordinates ATP.

Belongs to the RecF family.

It is found in the cytoplasm. The RecF protein is involved in DNA metabolism; it is required for DNA replication and normal SOS inducibility. RecF binds preferentially to single-stranded, linear DNA. It also seems to bind ATP. The chain is DNA replication and repair protein RecF from Clostridium novyi (strain NT).